Consider the following 488-residue polypeptide: MTKNNETGWNLDNSYTTLPQSFYTEIPPTPVSSPELVKLNHSLAISLGLTPEELKKEAEIAIFAGNALPEGAHPLAQAYAGHQFGHFNMLGDGRALLIGEQITPSGERFDIQLKGSGPTPYSRRGDGRAALGPMLREYIISEAMYALDIPTTRSLAVVTTGEATYRETKLPGAILTRVASSHIRVGTFQYAAARGSIEDLKSLADYTIKRHYPEIEAHENRYTALLQEVIKRQASLIAKWQLVGFIHGVMNTDNITISGETIDYGPCAFMDNYNQGTVFSSIDTQGRYAYGNQPYMAAWDLARLAESLIPILHEDEEEALKIAQDEISKFSVQYENHWFLGMKKKLGLFSTEEQDQPLIEQLLKMMEKYKADYTNTFRSLTLDAIENTALFESPEYKDWYKLWQSRLKRQEQSKENAYEMMKNNNPSIIPRNHRVEEALEAAVTNDDYSVMEKLLEALSNPYAYSTDQEEYCIPPAPTNRPYRTFCGT.

Positions 91, 93, 94, 114, 126, 127, 177, and 184 each coordinate ATP. Asp253 functions as the Proton acceptor in the catalytic mechanism. Residues Asn254 and Asp263 each contribute to the Mg(2+) site. Position 263 (Asp263) interacts with ATP.

Belongs to the SELO family. The cofactor is Mg(2+). It depends on Mn(2+) as a cofactor.

The enzyme catalyses L-seryl-[protein] + ATP = 3-O-(5'-adenylyl)-L-seryl-[protein] + diphosphate. It catalyses the reaction L-threonyl-[protein] + ATP = 3-O-(5'-adenylyl)-L-threonyl-[protein] + diphosphate. The catalysed reaction is L-tyrosyl-[protein] + ATP = O-(5'-adenylyl)-L-tyrosyl-[protein] + diphosphate. It carries out the reaction L-histidyl-[protein] + UTP = N(tele)-(5'-uridylyl)-L-histidyl-[protein] + diphosphate. The enzyme catalyses L-seryl-[protein] + UTP = O-(5'-uridylyl)-L-seryl-[protein] + diphosphate. It catalyses the reaction L-tyrosyl-[protein] + UTP = O-(5'-uridylyl)-L-tyrosyl-[protein] + diphosphate. Functionally, nucleotidyltransferase involved in the post-translational modification of proteins. It can catalyze the addition of adenosine monophosphate (AMP) or uridine monophosphate (UMP) to a protein, resulting in modifications known as AMPylation and UMPylation. The sequence is that of Protein nucleotidyltransferase YdiU from Bacillus cereus (strain G9842).